Here is a 461-residue protein sequence, read N- to C-terminus: Trimethylamine monooxygenase (461 aa).

Residues Ser14, Glu39, Lys40, Gln41, Met47, Trp48, and His64 each coordinate FAD. The NADP(+) site is built by Trp72 and Asn74. Residues Asn74 and Ala127 each coordinate FAD. Residues Ser206, Ser207, Ser209, Arg230, and Thr231 each contribute to the NADP(+) site. FAD is bound by residues Gln319 and Thr322. An NADP(+)-binding site is contributed by Arg413.

It belongs to the FMO family. The cofactor is FAD.

It catalyses the reaction trimethylamine + NADPH + O2 = trimethylamine N-oxide + NADP(+) + H2O. Functionally, catalyzes the oxidation of trimethylamine (TMA) to produce trimethylamine N-oxide (TMAO). The produced TMAO is accumulated in the cell, functioning as a piezolyte, improving both growth and survival at high hydrostatic pressure (HHP). This Myroides profundi protein is Trimethylamine monooxygenase.